The following is a 316-amino-acid chain: Universal stress protein E (316 aa).

The protein belongs to the universal stress protein A family.

The protein resides in the cytoplasm. Functionally, required for resistance to DNA-damaging agents. The chain is Universal stress protein E (uspE) from Escherichia coli O157:H7.